The following is a 514-amino-acid chain: 2-isopropylmalate synthase (514 aa).

The Pyruvate carboxyltransferase domain occupies 5-267 (LIIFDTTLRD…HTDIETREIV (263 aa)). Mn(2+) is bound by residues aspartate 14, histidine 202, histidine 204, and asparagine 238. The interval 393–514 (KLVALRVCSE…QRTHPQVGDV (122 aa)) is regulatory domain.

Belongs to the alpha-IPM synthase/homocitrate synthase family. LeuA type 1 subfamily. As to quaternary structure, homodimer. Requires Mn(2+) as cofactor.

Its subcellular location is the cytoplasm. The catalysed reaction is 3-methyl-2-oxobutanoate + acetyl-CoA + H2O = (2S)-2-isopropylmalate + CoA + H(+). The protein operates within amino-acid biosynthesis; L-leucine biosynthesis; L-leucine from 3-methyl-2-oxobutanoate: step 1/4. Catalyzes the condensation of the acetyl group of acetyl-CoA with 3-methyl-2-oxobutanoate (2-ketoisovalerate) to form 3-carboxy-3-hydroxy-4-methylpentanoate (2-isopropylmalate). The sequence is that of 2-isopropylmalate synthase from Methylococcus capsulatus (strain ATCC 33009 / NCIMB 11132 / Bath).